Consider the following 432-residue polypeptide: 2-oxoglutarate-dependent dioxygenase AOP2 (432 aa).

Positions 281-378 (SGDDVEANDD…RYTAAIFTCP (98 aa)) constitute a Fe2OG dioxygenase domain. The Fe cation site is built by His301, Asp303, and His358. Arg369 lines the 2-oxoglutarate pocket.

The protein belongs to the iron/ascorbate-dependent oxidoreductase family. It depends on Fe(2+) as a cofactor.

Functionally, 2-oxoglutarate-dependent dioxygenase involved in glucosinolates biosynthesis. Catalyzes the conversion of methylsulfinylalkyl glucosinolates to alkenyl glucosinolates. In Arabidopsis thaliana (Mouse-ear cress), this protein is 2-oxoglutarate-dependent dioxygenase AOP2 (AOP2).